The following is a 166-amino-acid chain: uncharacterized protein (166 aa).

This is an uncharacterized protein from Orgyia pseudotsugata (Douglas-fir tussock moth).